The sequence spans 86 residues: Small ribosomal subunit protein bS20 (86 aa).

The segment covering 1–11 has biased composition (basic residues); the sequence is MANIKQQKKRN. The disordered stretch occupies residues 1-20; sequence MANIKQQKKRNKTNEKRRLQ.

The protein belongs to the bacterial ribosomal protein bS20 family.

Its function is as follows. Binds directly to 16S ribosomal RNA. The protein is Small ribosomal subunit protein bS20 of Aster yellows witches'-broom phytoplasma (strain AYWB).